Consider the following 492-residue polypeptide: UPF0236 protein TTE1650/TTE2708 (492 aa).

It belongs to the UPF0236 family.

The chain is UPF0236 protein TTE1650/TTE2708 from Caldanaerobacter subterraneus subsp. tengcongensis (strain DSM 15242 / JCM 11007 / NBRC 100824 / MB4) (Thermoanaerobacter tengcongensis).